We begin with the raw amino-acid sequence, 143 residues long: Deoxyuridine 5'-triphosphate nucleotidohydrolase (143 aa).

The protein belongs to the dUTPase family. Requires Mg(2+) as cofactor.

The catalysed reaction is dUTP + H2O = dUMP + diphosphate + H(+). Its function is as follows. This enzyme is involved in nucleotide metabolism: it produces dUMP, the immediate precursor of thymidine nucleotides and it decreases the intracellular concentration of dUTP so that uracil cannot be incorporated into DNA. The protein is Deoxyuridine 5'-triphosphate nucleotidohydrolase (DUT) of Yaba monkey tumor virus (strain VR587) (YMTV).